The primary structure comprises 154 residues: Melatonin receptor type 1A (154 aa).

Residues 1–19 (YCYICHSLKYDRWYSNRNS) lie on the Cytoplasmic side of the membrane. The chain crosses the membrane as a helical span at residues 20-40 (LCCVFLICVLTLVAIVPNLCM). The Extracellular portion of the chain corresponds to 41-62 (GTLQYDPRIYSCTFAQSVSSAY). Residues 63-83 (TIAVVVFHFLVPMVIVIFRYL) traverse the membrane as a helical segment. Over 84–115 (RIWVLVLQIRWRAKPENNPRLKPQDFRNFVTM) the chain is Cytoplasmic. Residues 116–136 (FVVFVLFAICWAPLNFIGLAV) traverse the membrane as a helical segment. Over 137-149 (ASDPASMAPRIPE) the chain is Extracellular.

This sequence belongs to the G-protein coupled receptor 1 family.

The protein resides in the cell membrane. Functionally, high affinity receptor for melatonin. Likely to mediate the reproductive and circadian actions of melatonin. The activity of this receptor is mediated by pertussis toxin sensitive G proteins that inhibit adenylate cyclase activity. This is Melatonin receptor type 1A (MTNR1A) from Sus scrofa (Pig).